Here is a 148-residue protein sequence, read N- to C-terminus: UPF0756 membrane protein KPK_3307 (148 aa).

4 consecutive transmembrane segments (helical) span residues 14–34, 51–71, 86–106, and 121–141; these read ALGF…LIIV, LTVG…SGTL, LLAI…VSLM, and VLGV…AGII.

The protein belongs to the UPF0756 family.

The protein resides in the cell membrane. In Klebsiella pneumoniae (strain 342), this protein is UPF0756 membrane protein KPK_3307.